We begin with the raw amino-acid sequence, 158 residues long: 6,7-dimethyl-8-ribityllumazine synthase (158 aa).

5-amino-6-(D-ribitylamino)uracil-binding positions include phenylalanine 22, 57–59 (AYE), and 81–83 (AVI). 86 to 87 (GT) serves as a coordination point for (2S)-2-hydroxy-3-oxobutyl phosphate. Histidine 89 acts as the Proton donor in catalysis. Position 114 (phenylalanine 114) interacts with 5-amino-6-(D-ribitylamino)uracil. Arginine 128 lines the (2S)-2-hydroxy-3-oxobutyl phosphate pocket.

Belongs to the DMRL synthase family. As to quaternary structure, forms an icosahedral capsid composed of 60 subunits, arranged as a dodecamer of pentamers.

The enzyme catalyses (2S)-2-hydroxy-3-oxobutyl phosphate + 5-amino-6-(D-ribitylamino)uracil = 6,7-dimethyl-8-(1-D-ribityl)lumazine + phosphate + 2 H2O + H(+). It functions in the pathway cofactor biosynthesis; riboflavin biosynthesis; riboflavin from 2-hydroxy-3-oxobutyl phosphate and 5-amino-6-(D-ribitylamino)uracil: step 1/2. Catalyzes the formation of 6,7-dimethyl-8-ribityllumazine by condensation of 5-amino-6-(D-ribitylamino)uracil with 3,4-dihydroxy-2-butanone 4-phosphate. This is the penultimate step in the biosynthesis of riboflavin. This chain is 6,7-dimethyl-8-ribityllumazine synthase, found in Pseudoalteromonas atlantica (strain T6c / ATCC BAA-1087).